Consider the following 123-residue polypeptide: UPF0102 protein PputGB1_4524 (123 aa).

It belongs to the UPF0102 family.

This chain is UPF0102 protein PputGB1_4524, found in Pseudomonas putida (strain GB-1).